A 266-amino-acid polypeptide reads, in one-letter code: Undecaprenyl-diphosphatase 1 (266 aa).

The next 8 helical transmembrane spans lie at 1–21, 39–59, 87–107, 114–134, 149–169, 183–203, 218–238, and 246–266; these read MDTF…FLPI, QGLS…VIYF, WWII…KDFI, TGVI…ADKM, ALLI…RSGA, AAAR…AILV, ALTL…HYFL, and MTPF…FIFL.

It belongs to the UppP family.

The protein localises to the cell inner membrane. It catalyses the reaction di-trans,octa-cis-undecaprenyl diphosphate + H2O = di-trans,octa-cis-undecaprenyl phosphate + phosphate + H(+). Catalyzes the dephosphorylation of undecaprenyl diphosphate (UPP). Confers resistance to bacitracin. The protein is Undecaprenyl-diphosphatase 1 of Shewanella oneidensis (strain ATCC 700550 / JCM 31522 / CIP 106686 / LMG 19005 / NCIMB 14063 / MR-1).